Here is a 257-residue protein sequence, read N- to C-terminus: MGRGKVELKRIENKISRQVTFAKRRNGLLKKAYELSLLCDAEVALIIFSGRGRLFEFSSSSCMYKTLERYRSCNYNSQDAAAPENEINYQEYLKLKTRVEFLQTTQRNILGEDLGPLSMKELEQLENQIEVSLKQIRSRKNQALLDQLFDLKSKEQQLQDLNKDLRKKLQETSAENVLHMSWQDGGGHSGSSTVLADQPHHHQGLLHPHPDQGDHSLQIGYHHPHAHHHQAYMDHLSNEAADMVAHHPNEHIPSGWI.

The 61-residue stretch at 1-61 (MGRGKVELKR…GRLFEFSSSS (61 aa)) folds into the MADS-box domain. Positions 85–175 (NEINYQEYLK…RKKLQETSAE (91 aa)) constitute a K-box domain.

In terms of assembly, may interact with the K-box of MADS6, MADS14 and MADS15.

It localises to the nucleus. Its function is as follows. Probable transcription factor involved in the development of floral organs. Required for the formation of inner floral organs (lodicules, stamens and carpels, or whorls 2, 3 and 4) and the lemma and palea (whorl 1), which are grass floral organs analogous to sepals. May be involved in the control of flowering time. Seems to act as transcriptional activator. May act upstream of the auxin-responsive protein GH3.8. The sequence is that of MADS-box transcription factor 1 (MADS1) from Oryza sativa subsp. indica (Rice).